The following is a 469-amino-acid chain: MNPNQKIITIGSVSLTIATVCFLMQIAILVTTVTLHFKQYECDSPASNQVMPCEPIIIERNITEIVYLNNTTIDKEKCPKVVEYRNWSKPQCQITGFAPFSKDNSIRLSAGGDIWVTREPYVSCDHGKCYQFALGQGTTLDNKHSNDTIHDRIPHRTLLMNELGVPFHLGTRQVCIAWSSSSCHDGKAWLHVCITGDDKNATASFIYDGRLVDSIGSWSQNILRTQESECVCINGTCTVVMTDGSASGRADTRILFIEEGKIVHISPLSGSAQHVEECSCYPRYPGVRCICRDNWKGSNRPVVDINMEDYSIDSSYVCSGLVGDTPRNDDRSSNSNCRNPNNERGNQGVKGWAFDNGDDVWMGRTISKDLRSGYETFKVIGGWSTPNSKSQINRQVIVDSDNRSGYSGIFSVEGKSCINRCFYVELIRGRKQETRVWWTSNSIVVFCGTSGTYGTGSWPDGANINFMPI.

At 1–9 the chain is on the intravirion side; it reads MNPNQKIIT. A helical transmembrane segment spans residues 10–30; that stretch reads IGSVSLTIATVCFLMQIAILV. The tract at residues 11–33 is involved in apical transport and lipid raft association; sequence GSVSLTIATVCFLMQIAILVTTV. Topologically, residues 31-469 are virion surface; the sequence is TTVTLHFKQY…DGANINFMPI (439 aa). Residues 36–88 are hypervariable stalk region; it reads HFKQYECDSPASNQVMPCEPIIIERNITEIVYLNNTTIDKEKCPKVVEYRNWS. N-linked (GlcNAc...) asparagine; by host glycans are attached at residues N61, N69, N70, and N86. The interval 91–469 is head of neuraminidase; the sequence is QCQITGFAPF…DGANINFMPI (379 aa). 8 disulfide bridges follow: C92/C417, C124/C129, C183/C230, C232/C237, C278/C291, C280/C289, C318/C337, and C421/C447. R118 provides a ligand contact to substrate. N146 is a glycosylation site (N-linked (GlcNAc...) asparagine; by host). D151 serves as the catalytic Proton donor/acceptor. R152 lines the substrate pocket. 2 N-linked (GlcNAc...) asparagine; by host glycosylation sites follow: N200 and N234. Substrate is bound at residue 276 to 277; it reads EE. R292 is a binding site for substrate. D293, G297, and D324 together coordinate Ca(2+). The disordered stretch occupies residues 324-350; it reads DTPRNDDRSSNSNCRNPNNERGNQGVK. The span at 333-342 shows a compositional bias: low complexity; that stretch reads SNSNCRNPNN. Residue R371 participates in substrate binding. Residue N402 is glycosylated (N-linked (GlcNAc...) asparagine; by host). The active-site Nucleophile is the Y406.

It belongs to the glycosyl hydrolase 34 family. In terms of assembly, homotetramer. It depends on Ca(2+) as a cofactor. In terms of processing, N-glycosylated.

Its subcellular location is the virion membrane. It is found in the host apical cell membrane. It catalyses the reaction Hydrolysis of alpha-(2-&gt;3)-, alpha-(2-&gt;6)-, alpha-(2-&gt;8)- glycosidic linkages of terminal sialic acid residues in oligosaccharides, glycoproteins, glycolipids, colominic acid and synthetic substrates.. With respect to regulation, inhibited by the neuraminidase inhibitors zanamivir (Relenza) and oseltamivir (Tamiflu). These drugs interfere with the release of progeny virus from infected cells and are effective against all influenza strains. Resistance to neuraminidase inhibitors is quite rare. Catalyzes the removal of terminal sialic acid residues from viral and cellular glycoconjugates. Cleaves off the terminal sialic acids on the glycosylated HA during virus budding to facilitate virus release. Additionally helps virus spread through the circulation by further removing sialic acids from the cell surface. These cleavages prevent self-aggregation and ensure the efficient spread of the progeny virus from cell to cell. Otherwise, infection would be limited to one round of replication. Described as a receptor-destroying enzyme because it cleaves a terminal sialic acid from the cellular receptors. May facilitate viral invasion of the upper airways by cleaving the sialic acid moieties on the mucin of the airway epithelial cells. Likely to plays a role in the budding process through its association with lipid rafts during intracellular transport. May additionally display a raft-association independent effect on budding. Plays a role in the determination of host range restriction on replication and virulence. Sialidase activity in late endosome/lysosome traffic seems to enhance virus replication. This chain is Neuraminidase, found in Aves (whales).